The chain runs to 461 residues: ATP synthase subunit beta (461 aa).

151-158 contacts ATP; that stretch reads GGAGVGKT.

This sequence belongs to the ATPase alpha/beta chains family. F-type ATPases have 2 components, CF(1) - the catalytic core - and CF(0) - the membrane proton channel. CF(1) has five subunits: alpha(3), beta(3), gamma(1), delta(1), epsilon(1). CF(0) has three main subunits: a(1), b(2) and c(9-12). The alpha and beta chains form an alternating ring which encloses part of the gamma chain. CF(1) is attached to CF(0) by a central stalk formed by the gamma and epsilon chains, while a peripheral stalk is formed by the delta and b chains.

Its subcellular location is the cell inner membrane. It catalyses the reaction ATP + H2O + 4 H(+)(in) = ADP + phosphate + 5 H(+)(out). Produces ATP from ADP in the presence of a proton gradient across the membrane. The catalytic sites are hosted primarily by the beta subunits. This is ATP synthase subunit beta from Idiomarina loihiensis (strain ATCC BAA-735 / DSM 15497 / L2-TR).